A 386-amino-acid chain; its full sequence is Alanine racemase (386 aa).

K38 (proton acceptor; specific for D-alanine) is an active-site residue. The residue at position 38 (K38) is an N6-(pyridoxal phosphate)lysine. Residue R136 participates in substrate binding. Catalysis depends on Y267, which acts as the Proton acceptor; specific for L-alanine. M315 contributes to the substrate binding site.

This sequence belongs to the alanine racemase family. The cofactor is pyridoxal 5'-phosphate.

It carries out the reaction L-alanine = D-alanine. Its pathway is amino-acid biosynthesis; D-alanine biosynthesis; D-alanine from L-alanine: step 1/1. Catalyzes the interconversion of L-alanine and D-alanine. May also act on other amino acids. The protein is Alanine racemase (alr) of Clostridium perfringens (strain SM101 / Type A).